A 233-amino-acid chain; its full sequence is Small ribosomal subunit protein uS3 (233 aa).

The KH type-2 domain maps to V39 to R107.

The protein belongs to the universal ribosomal protein uS3 family. In terms of assembly, part of the 30S ribosomal subunit. Forms a tight complex with proteins S10 and S14.

Functionally, binds the lower part of the 30S subunit head. Binds mRNA in the 70S ribosome, positioning it for translation. The sequence is that of Small ribosomal subunit protein uS3 from Buchnera aphidicola subsp. Schizaphis graminum (strain Sg).